Here is a 497-residue protein sequence, read N- to C-terminus: Sperm motility kinase Z (497 aa).

The Protein kinase domain maps to 28–275 (YTVLKTLSQH…AQDLLSHPWL (248 aa)). ATP contacts are provided by residues 34–42 (LSQHGTTEV) and Lys57. Asp146 functions as the Proton acceptor in the catalytic mechanism. One can recognise a UBA domain in the interval 292–332 (FPDPDIMAAMKNIGFHVQDIRESLKHRKFDETMATYNLLRA). Disordered stretches follow at residues 383–410 (TEEHQLRQTGGTNAPFPPKKTPTMGRSQ) and 439–460 (SSQAEKTSSDPEKSETSTSCPL).

The protein belongs to the protein kinase superfamily. CAMK Ser/Thr protein kinase family. Smok subfamily.

It catalyses the reaction L-seryl-[protein] + ATP = O-phospho-L-seryl-[protein] + ADP + H(+). The catalysed reaction is L-threonyl-[protein] + ATP = O-phospho-L-threonyl-[protein] + ADP + H(+). May play a role in sperm motility, especially in the regulation of flagellar function. The polypeptide is Sperm motility kinase Z (Gm4922) (Mus musculus (Mouse)).